Here is a 708-residue protein sequence, read N- to C-terminus: MKLFVPALLSLGALGLCLAAPRKNVRWCAISLPEWSKCYQWQRRMRKLGAPSITCIRRTSALECIRAIAGKNADAVTLDSGMVFEAGLDPYKLRPVAAEIYGTEKSPQTHYYAVAVVKKGSNFQLDQLQGQKSCHMGLGRSAGWNIPVGILRPFLSWTESAEPLQGAVARFFSASCVPCVDGKAYPNLCQLCKGVGENKCACSSQEPYFGYSGAFKCLQDGAGDVAFVKETTVFENLPEKADRDQYELLCLNNTRAPVDAFKECHLAQVPSHAVVARSVDGKENLIWELLRKAQEKFGKNKSQSFQLFGSPEGRRDLLFKDSALGFVRIPSKVDSALYLGSRYLTALKNLRETAEELKARCTRVVWCAVGPEEQSKCQQWSEQSGQNVTCATASTTDDCIALVLKGEADALSLDGGYIYTAGKCGLVPVMAENRKSSKYSSLDCVLRPTEGYLAVAVVKKANEGLTWNSLKGKKSCHTAVDRTAGWNIPMGLIANQTGSCAFDEFFSQSCAPGADPKSSLCALCAGDDQGLDKCVPNSKEKYYGYTGAFRCLAEDVGDVAFVKNDTVWENTNGESSADWAKNLNREDFRLLCLDGTTKPVTEAQSCYLAVAPNHAVVSRSDRAAHVEQVLLHQQALFGKNGKNCPDQFCLFKSETKNLLFNDNTECLAKLGGRPTYEKYLGTEYVTAIANLKKCSTSPLLEACAFLTR.

Residues 1–19 form the signal peptide; the sequence is MKLFVPALLSLGALGLCLA. Transferrin-like domains lie at 25–352 and 364–693; these read VRWC…NLRE and VVWC…NLKK. Intrachain disulfides connect C28/C64 and C38/C55. D79 contacts Fe(3+). K92 is a catalytic residue. Y111 is a binding site for Fe(3+). Disulfide bonds link C134–C217, C176–C192, C179–C202, C189–C200, and C250–C264. The hydrogencarbonate site is built by R140, A142, and G143. Position 211 (Y211) interacts with Fe(3+). N252 carries N-linked (GlcNAc...) (high mannose) asparagine glycosylation. A Fe(3+)-binding site is contributed by H272. S278 functions as the Nucleophile in the catalytic mechanism. Residue N300 is glycosylated (N-linked (GlcNAc...) asparagine). Intrachain disulfides connect C367–C399 and C377–C390. N387 carries N-linked (GlcNAc...) (complex) asparagine; alternate glycosylation. N-linked (GlcNAc...) (high mannose) asparagine; alternate glycosylation occurs at N387. N387 carries N-linked (GlcNAc...) (hybrid) asparagine; alternate glycosylation. Residues D414 and Y452 each coordinate Fe(3+). Cystine bridges form between C424-C703, C444-C666, C476-C551, C500-C694, C510-C524, C521-C534, C592-C606, and C644-C649. Positions 478, 482, 484, and 485 each coordinate hydrogencarbonate. N495 carries N-linked (GlcNAc...) (complex) asparagine; alternate glycosylation. The N-linked (GlcNAc...) (high mannose) asparagine; alternate glycan is linked to N495. A glycan (N-linked (GlcNAc...) (hybrid) asparagine; alternate) is linked at N495. Y545 contributes to the Fe(3+) binding site. N-linked (GlcNAc...) (high mannose) asparagine glycosylation is present at N564. Fe(3+) is bound at residue H614.

Belongs to the transferrin family. In terms of assembly, monomer. Found in a complex with LTF, CLU, EPPIN and SEMG1. Found in a complex with MPO and LTF; interacts directly with CP, allows Fe(3+) incorporation into LTF and activation of CP ferroxidase activity. Post-translationally, poly-N-acetyllactosaminic carbohydrate moiety seems to be needed for TLR4 activation.

Its subcellular location is the secreted. It is found in the cytoplasmic granule. Functionally, transferrins are iron binding transport proteins which can bind two Fe(3+) ions in association with the binding of an anion, usually bicarbonate. In terms of biological role, major iron-binding and multifunctional protein found in exocrine fluids such as breast milk and mucosal secretions. Has antimicrobial activity, which depends on the extracellular cation concentration. Antimicrobial properties include bacteriostasis, which is related to its ability to sequester free iron and thus inhibit microbial growth, as well as direct bactericidal properties leading to the release of lipopolysaccharides from the bacterial outer membrane. Can also prevent bacterial biofilm development in P.aeruginosa infection. Has weak antifungal activity against C.albicans. Has anabolic, differentiating and anti-apoptotic effects on osteoblasts and can also inhibit osteoclastogenesis, possibly playing a role in the regulation of bone growth. Promotes binding of species C adenoviruses to epithelial cells, promoting adenovirus infection. Can inhibit papillomavirus infections. Stimulates the TLR4 signaling pathway leading to NF-kappa-B activation and subsequent pro-inflammatory cytokine production while also interfering with the lipopolysaccharide (LPS)-stimulated TLR4 signaling. Inhibits neutrophil granulocyte migration to sites of apoptosis, when secreted by apoptotic cells. Stimulates VEGFA-mediated endothelial cell migration and proliferation. Binds heparin, chondroitin sulfate and possibly other glycosaminoglycans (GAGs). Also binds specifically to pneumococcal surface protein A (PspA), the lipid A portion of bacterial lipopolysaccharide (LPS), lysozyme and DNA. Its function is as follows. Lactoferricin binds to the bacterial surface and is crucial for the bactericidal functions. Has some antiviral activity against papillomavirus infection. N-terminal region shows strong antifungal activity against C.albicans. Contains two BBXB heparin-binding consensus sequences that appear to form the predominate functional GAG-binding site. The lactotransferrin transferrin-like domain 1 functions as a serine protease of the peptidase S60 family that cuts arginine rich regions. This function contributes to the antimicrobial activity. Shows a preferential cleavage at -Arg-Ser-Arg-Arg-|- and -Arg-Arg-Ser-Arg-|-, and of Z-Phe-Arg-|-aminomethylcoumarin sites. This chain is Lactotransferrin (LTF), found in Capra hircus (Goat).